An 88-amino-acid polypeptide reads, in one-letter code: Apolipoprotein C-I (88 aa).

A signal peptide spans 1 to 26; the sequence is MRLFLSLPVLVVVLAMVLEGPAPTQA.

It belongs to the apolipoprotein C1 family.

The protein resides in the secreted. Its function is as follows. Inhibitor of lipoprotein binding to the low density lipoprotein (LDL) receptor, LDL receptor-related protein, and very low density lipoprotein (VLDL) receptor. Associates with high density lipoproteins (HDL) and the triacylglycerol-rich lipoproteins in the plasma and makes up about 10% of the protein of the VLDL and 2% of that of HDL. Appears to interfere directly with fatty acid uptake and is also the major plasma inhibitor of cholesteryl ester transfer protein (CETP). Binds free fatty acids and reduces their intracellular esterification. Modulates the interaction of APOE with beta-migrating VLDL and inhibits binding of beta-VLDL to the LDL receptor-related protein. The protein is Apolipoprotein C-I (APOC1) of Leptonychotes weddellii (Weddell seal).